Consider the following 282-residue polypeptide: Pantothenate synthetase (282 aa).

30–37 provides a ligand contact to ATP; it reads MGYLHEGH. Residue His-37 is the Proton donor of the active site. Position 61 (Gln-61) interacts with (R)-pantoate. Gln-61 provides a ligand contact to beta-alanine. 147 to 150 serves as a coordination point for ATP; sequence GMKD. Gln-153 serves as a coordination point for (R)-pantoate. ATP contacts are provided by residues Val-176 and 184–187; that span reads KSSR.

Belongs to the pantothenate synthetase family. As to quaternary structure, homodimer.

It is found in the cytoplasm. It catalyses the reaction (R)-pantoate + beta-alanine + ATP = (R)-pantothenate + AMP + diphosphate + H(+). The protein operates within cofactor biosynthesis; (R)-pantothenate biosynthesis; (R)-pantothenate from (R)-pantoate and beta-alanine: step 1/1. Its function is as follows. Catalyzes the condensation of pantoate with beta-alanine in an ATP-dependent reaction via a pantoyl-adenylate intermediate. This is Pantothenate synthetase from Bacillus thuringiensis subsp. konkukian (strain 97-27).